Consider the following 879-residue polypeptide: Phosphoenolpyruvate carboxylase (879 aa).

Active-site residues include His138 and Lys546.

This sequence belongs to the PEPCase type 1 family. Requires Mg(2+) as cofactor.

It carries out the reaction oxaloacetate + phosphate = phosphoenolpyruvate + hydrogencarbonate. Functionally, forms oxaloacetate, a four-carbon dicarboxylic acid source for the tricarboxylic acid cycle. In Pectobacterium atrosepticum (strain SCRI 1043 / ATCC BAA-672) (Erwinia carotovora subsp. atroseptica), this protein is Phosphoenolpyruvate carboxylase.